The following is a 108-amino-acid chain: Large ribosomal subunit protein uL23 (108 aa).

It belongs to the universal ribosomal protein uL23 family. Part of the 50S ribosomal subunit. Contacts protein L29, and trigger factor when it is bound to the ribosome.

Its function is as follows. One of the early assembly proteins it binds 23S rRNA. One of the proteins that surrounds the polypeptide exit tunnel on the outside of the ribosome. Forms the main docking site for trigger factor binding to the ribosome. The sequence is that of Large ribosomal subunit protein uL23 from Leptothrix cholodnii (strain ATCC 51168 / LMG 8142 / SP-6) (Leptothrix discophora (strain SP-6)).